The following is a 189-amino-acid chain: GMP synthase [glutamine-hydrolyzing] subunit A (189 aa).

The region spanning 1–189 is the Glutamine amidotransferase type-1 domain; the sequence is MIVILNNGGQ…CKKCGFEFEE (189 aa). The active-site Nucleophile is cysteine 76. Active-site residues include histidine 163 and glutamate 165.

As to quaternary structure, heterodimer composed of a glutamine amidotransferase subunit (A) and a GMP-binding subunit (B).

The catalysed reaction is XMP + L-glutamine + ATP + H2O = GMP + L-glutamate + AMP + diphosphate + 2 H(+). Its pathway is purine metabolism; GMP biosynthesis; GMP from XMP (L-Gln route): step 1/1. Its function is as follows. Catalyzes the synthesis of GMP from XMP. This chain is GMP synthase [glutamine-hydrolyzing] subunit A, found in Methanococcus maripaludis (strain C6 / ATCC BAA-1332).